Here is a 293-residue protein sequence, read N- to C-terminus: 4-hydroxy-tetrahydrodipicolinate synthase (293 aa).

Thr-45 contacts pyruvate. Tyr-133 functions as the Proton donor/acceptor in the catalytic mechanism. Catalysis depends on Lys-161, which acts as the Schiff-base intermediate with substrate. Val-203 contacts pyruvate.

It belongs to the DapA family. Homotetramer; dimer of dimers.

The protein resides in the cytoplasm. The catalysed reaction is L-aspartate 4-semialdehyde + pyruvate = (2S,4S)-4-hydroxy-2,3,4,5-tetrahydrodipicolinate + H2O + H(+). The protein operates within amino-acid biosynthesis; L-lysine biosynthesis via DAP pathway; (S)-tetrahydrodipicolinate from L-aspartate: step 3/4. Its function is as follows. Catalyzes the condensation of (S)-aspartate-beta-semialdehyde [(S)-ASA] and pyruvate to 4-hydroxy-tetrahydrodipicolinate (HTPA). This is 4-hydroxy-tetrahydrodipicolinate synthase from Exiguobacterium sp. (strain ATCC BAA-1283 / AT1b).